Consider the following 457-residue polypeptide: TnpB-like protein ORF457 (457 aa).

The tract at residues 1–22 is disordered; the sequence is MPPSSGQLLGDEEREPTSTPAI.

This sequence in the N-terminal section; belongs to the transposase 2 family. In the C-terminal section; belongs to the transposase 35 family.

In Acidianus two-tailed virus (ATV), this protein is TnpB-like protein ORF457.